The chain runs to 339 residues: tRNA N6-adenosine threonylcarbamoyltransferase (339 aa).

Positions 111 and 115 each coordinate Fe cation. Substrate-binding positions include leucine 134 to glycine 138, aspartate 167, glycine 180, and asparagine 270. Residue aspartate 298 participates in Fe cation binding.

It belongs to the KAE1 / TsaD family. The cofactor is Fe(2+).

The protein resides in the cytoplasm. It carries out the reaction L-threonylcarbamoyladenylate + adenosine(37) in tRNA = N(6)-L-threonylcarbamoyladenosine(37) in tRNA + AMP + H(+). Functionally, required for the formation of a threonylcarbamoyl group on adenosine at position 37 (t(6)A37) in tRNAs that read codons beginning with adenine. Is involved in the transfer of the threonylcarbamoyl moiety of threonylcarbamoyl-AMP (TC-AMP) to the N6 group of A37, together with TsaE and TsaB. TsaD likely plays a direct catalytic role in this reaction. This is tRNA N6-adenosine threonylcarbamoyltransferase from Alkalilimnicola ehrlichii (strain ATCC BAA-1101 / DSM 17681 / MLHE-1).